A 210-amino-acid chain; its full sequence is ESCRT-III complex subunit did4 (210 aa).

Residues 1-38 (MGLTSWLFGGGKSPQEQLRAHQRSLGRAERELDRERTK) form a disordered region. Positions 15–97 (QEQLRAHQRS…AISLRLQTMR (83 aa)) form a coiled coil. The span at 26–38 (GRAERELDRERTK) shows a compositional bias: basic and acidic residues.

This sequence belongs to the SNF7 family. In terms of assembly, core component of the ESCRT-III complex (endosomal sorting required for transport complex III). ESCRT-III appears to be sequentially assembled as a flat lattice on the endosome membrane.

Its subcellular location is the cytoplasm. It localises to the endosome membrane. In terms of biological role, required for the sorting and concentration of proteins resulting in the entry of these proteins into the invaginating vesicles of the multivesicular body (MVB). Acts a component of the ESCRT-III complex, which appears to be critical for late steps in MVB sorting, such as membrane invagination and final cargo sorting and recruitment of late-acting components of the sorting machinery. The MVB pathway requires the sequential function of ESCRT-O, -I,-II and -III complex assemblies. The protein is ESCRT-III complex subunit did4 (did4) of Schizosaccharomyces pombe (strain 972 / ATCC 24843) (Fission yeast).